Reading from the N-terminus, the 94-residue chain is Large ribosomal subunit protein bL25 (94 aa).

The protein belongs to the bacterial ribosomal protein bL25 family. As to quaternary structure, part of the 50S ribosomal subunit; part of the 5S rRNA/L5/L18/L25 subcomplex. Contacts the 5S rRNA. Binds to the 5S rRNA independently of L5 and L18.

In terms of biological role, this is one of the proteins that binds to the 5S RNA in the ribosome where it forms part of the central protuberance. This is Large ribosomal subunit protein bL25 from Cronobacter sakazakii (strain ATCC BAA-894) (Enterobacter sakazakii).